The chain runs to 258 residues: Imidazole glycerol phosphate synthase subunit HisF (258 aa).

Catalysis depends on residues D11 and D130.

The protein belongs to the HisA/HisF family. In terms of assembly, heterodimer of HisH and HisF.

Its subcellular location is the cytoplasm. The enzyme catalyses 5-[(5-phospho-1-deoxy-D-ribulos-1-ylimino)methylamino]-1-(5-phospho-beta-D-ribosyl)imidazole-4-carboxamide + L-glutamine = D-erythro-1-(imidazol-4-yl)glycerol 3-phosphate + 5-amino-1-(5-phospho-beta-D-ribosyl)imidazole-4-carboxamide + L-glutamate + H(+). It participates in amino-acid biosynthesis; L-histidine biosynthesis; L-histidine from 5-phospho-alpha-D-ribose 1-diphosphate: step 5/9. Its function is as follows. IGPS catalyzes the conversion of PRFAR and glutamine to IGP, AICAR and glutamate. The HisF subunit catalyzes the cyclization activity that produces IGP and AICAR from PRFAR using the ammonia provided by the HisH subunit. The sequence is that of Imidazole glycerol phosphate synthase subunit HisF from Escherichia coli O7:K1 (strain IAI39 / ExPEC).